Reading from the N-terminus, the 537-residue chain is Berberine bridge enzyme-like 26 (537 aa).

Residues 1–27 form the signal peptide; it reads MGISKPLPLFSILVLYFSLYTITPTSS. Cys-38 and Cys-102 are disulfide-bonded. N-linked (GlcNAc...) asparagine glycosylation is present at Asn-59. One can recognise an FAD-binding PCMH-type domain in the interval 80–256; that stretch reads SMPKPGFIFS…LAWKIKLVPV (177 aa). The segment at residues 117–181 is a cross-link (6-(S-cysteinyl)-8alpha-(pros-histidyl)-FAD (His-Cys)); the sequence is HDYEGLSYVS…KVHGFPAGLC (65 aa). Residue Asn-306 is glycosylated (N-linked (GlcNAc...) asparagine).

The protein belongs to the oxygen-dependent FAD-linked oxidoreductase family. Requires FAD as cofactor. Post-translationally, the FAD cofactor is bound via a bicovalent 6-S-cysteinyl, 8alpha-N1-histidyl FAD linkage.

The protein resides in the secreted. Its subcellular location is the cell wall. This chain is Berberine bridge enzyme-like 26, found in Arabidopsis thaliana (Mouse-ear cress).